A 99-amino-acid polypeptide reads, in one-letter code: RNA-binding protein Hfq (99 aa).

The 60-residue stretch at Asp-9–Val-68 folds into the Sm domain. The interval Pro-64–Glu-99 is disordered.

Belongs to the Hfq family. Homohexamer.

RNA chaperone that binds small regulatory RNA (sRNAs) and mRNAs to facilitate mRNA translational regulation in response to envelope stress, environmental stress and changes in metabolite concentrations. Also binds with high specificity to tRNAs. This is RNA-binding protein Hfq from Pectobacterium carotovorum subsp. carotovorum (strain PC1).